The primary structure comprises 429 residues: Serine--tRNA ligase (429 aa).

234–236 (TSE) contacts L-serine. ATP-binding positions include 265 to 267 (RKE) and valine 281. An L-serine-binding site is contributed by glutamate 288. 352–355 (ELVS) serves as a coordination point for ATP. Threonine 389 contacts L-serine.

Belongs to the class-II aminoacyl-tRNA synthetase family. Type-1 seryl-tRNA synthetase subfamily. In terms of assembly, homodimer. The tRNA molecule probably binds across the dimer.

It catalyses the reaction tRNA(Ser) + L-serine + ATP = L-seryl-tRNA(Ser) + AMP + diphosphate + H(+). The catalysed reaction is tRNA(Sec) + L-serine + ATP = L-seryl-tRNA(Sec) + AMP + diphosphate + H(+). It participates in aminoacyl-tRNA biosynthesis; selenocysteinyl-tRNA(Sec) biosynthesis; L-seryl-tRNA(Sec) from L-serine and tRNA(Sec): step 1/1. In terms of biological role, catalyzes the attachment of serine to tRNA(Ser). Is also probably able to aminoacylate tRNA(Sec) with serine, to form the misacylated tRNA L-seryl-tRNA(Sec), which will be further converted into selenocysteinyl-tRNA(Sec). This Encephalitozoon cuniculi (strain GB-M1) (Microsporidian parasite) protein is Serine--tRNA ligase.